The primary structure comprises 287 residues: uncharacterized protein (287 aa).

The region spanning 183-281 (WEAARYLQEH…GISPIEYRKI (99 aa)) is the HTH araC/xylS-type domain. 2 DNA-binding regions (H-T-H motif) span residues 200–221 (KDLS…QQVL) and 248–271 (MGVI…KQIE).

This is an uncharacterized protein from Bacillus subtilis (strain 168).